Consider the following 256-residue polypeptide: Ubiquinone/menaquinone biosynthesis C-methyltransferase UbiE (256 aa).

Residues 1-12 (MNDQRKGEHAEP) show a composition bias toward basic and acidic residues. Residues 1-21 (MNDQRKGEHAEPTTHFGYQDV) are disordered. S-adenosyl-L-methionine is bound by residues T79, D100, and 128–129 (DA).

This sequence belongs to the class I-like SAM-binding methyltransferase superfamily. MenG/UbiE family.

It catalyses the reaction a 2-demethylmenaquinol + S-adenosyl-L-methionine = a menaquinol + S-adenosyl-L-homocysteine + H(+). The enzyme catalyses a 2-methoxy-6-(all-trans-polyprenyl)benzene-1,4-diol + S-adenosyl-L-methionine = a 5-methoxy-2-methyl-3-(all-trans-polyprenyl)benzene-1,4-diol + S-adenosyl-L-homocysteine + H(+). Its pathway is quinol/quinone metabolism; menaquinone biosynthesis; menaquinol from 1,4-dihydroxy-2-naphthoate: step 2/2. It functions in the pathway cofactor biosynthesis; ubiquinone biosynthesis. In terms of biological role, methyltransferase required for the conversion of demethylmenaquinol (DMKH2) to menaquinol (MKH2) and the conversion of 2-polyprenyl-6-methoxy-1,4-benzoquinol (DDMQH2) to 2-polyprenyl-3-methyl-6-methoxy-1,4-benzoquinol (DMQH2). This chain is Ubiquinone/menaquinone biosynthesis C-methyltransferase UbiE, found in Pseudomonas putida (strain W619).